The sequence spans 558 residues: 2-isopropylmalate synthase (558 aa).

Residues 30–303 (PIWCSVDLRD…DPELDCRDIE (274 aa)) enclose the Pyruvate carboxyltransferase domain. Mg(2+) is bound by residues aspartate 39, histidine 242, histidine 244, and asparagine 278. The segment at 437–558 (QPNARIKFVD…ANRVLEERAK (122 aa)) is regulatory domain.

This sequence belongs to the alpha-IPM synthase/homocitrate synthase family. LeuA type 2 subfamily. Homodimer. It depends on Mg(2+) as a cofactor.

Its subcellular location is the cytoplasm. The enzyme catalyses 3-methyl-2-oxobutanoate + acetyl-CoA + H2O = (2S)-2-isopropylmalate + CoA + H(+). Its pathway is amino-acid biosynthesis; L-leucine biosynthesis; L-leucine from 3-methyl-2-oxobutanoate: step 1/4. Its function is as follows. Catalyzes the condensation of the acetyl group of acetyl-CoA with 3-methyl-2-oxobutanoate (2-ketoisovalerate) to form 3-carboxy-3-hydroxy-4-methylpentanoate (2-isopropylmalate). The chain is 2-isopropylmalate synthase from Agrobacterium fabrum (strain C58 / ATCC 33970) (Agrobacterium tumefaciens (strain C58)).